The primary structure comprises 636 residues: Chaperone protein HtpG (636 aa).

The segment at 1–345 is a; substrate-binding; sequence MSESATANAN…SSDLPLNVSR (345 aa). A b region spans residues 346-562; the sequence is EILQQSKDID…EHDPSGNLAR (217 aa). The segment at 563–636 is c; sequence LMKAAGQPMP…NDLMMALSAK (74 aa).

The protein belongs to the heat shock protein 90 family. Homodimer.

It is found in the cytoplasm. Functionally, molecular chaperone. Has ATPase activity. This is Chaperone protein HtpG from Dechloromonas aromatica (strain RCB).